We begin with the raw amino-acid sequence, 546 residues long: Chaperonin GroEL (546 aa).

Residues 29-32 (TMGP), lysine 50, 86-90 (DGTTT), glycine 412, 476-478 (NAA), and aspartate 492 contribute to the ATP site.

The protein belongs to the chaperonin (HSP60) family. As to quaternary structure, forms a cylinder of 14 subunits composed of two heptameric rings stacked back-to-back. Interacts with the co-chaperonin GroES.

The protein localises to the cytoplasm. It catalyses the reaction ATP + H2O + a folded polypeptide = ADP + phosphate + an unfolded polypeptide.. Together with its co-chaperonin GroES, plays an essential role in assisting protein folding. The GroEL-GroES system forms a nano-cage that allows encapsulation of the non-native substrate proteins and provides a physical environment optimized to promote and accelerate protein folding. Functionally, may play a protective role against the defense mechanisms generated by the infected macrophages. The chain is Chaperonin GroEL from Legionella micdadei (Tatlockia micdadei).